The chain runs to 435 residues: Glutamyl-tRNA reductase (435 aa).

Substrate contacts are provided by residues 49 to 52, serine 109, 114 to 116, and glutamine 120; these read TCNR and ETQ. The active-site Nucleophile is cysteine 50. Residue 189-194 participates in NADP(+) binding; the sequence is GAGEMS.

It belongs to the glutamyl-tRNA reductase family. As to quaternary structure, homodimer.

It catalyses the reaction (S)-4-amino-5-oxopentanoate + tRNA(Glu) + NADP(+) = L-glutamyl-tRNA(Glu) + NADPH + H(+). It participates in porphyrin-containing compound metabolism; protoporphyrin-IX biosynthesis; 5-aminolevulinate from L-glutamyl-tRNA(Glu): step 1/2. Its function is as follows. Catalyzes the NADPH-dependent reduction of glutamyl-tRNA(Glu) to glutamate 1-semialdehyde (GSA). In Listeria monocytogenes serotype 4a (strain HCC23), this protein is Glutamyl-tRNA reductase.